Consider the following 123-residue polypeptide: Anti-lipopolysaccharide factor (123 aa).

A signal peptide spans 1–26 (MRTRVMAGLCVALVVMCLYMPQPCEA). A disulfide bridge links Cys55 with Cys76.

Strong expression in hemocytes, heart and muscle, with weaker expression detected in gills and hepatopancreas. No expression detected in eyes.

The protein localises to the secreted. Its function is as follows. Binds to bacterial LPS and may specifically inhibit the LPS-mediated activation of the hemolymph coagulation. It has a strong antibacterial effect especially on the growth of Gram-negative bacteria. The chain is Anti-lipopolysaccharide factor from Scylla serrata (Mud crab).